The chain runs to 284 residues: MTTPQFYCQYCMASLLGKKYVLKDDNPYCVSCYDRIFSNYCEECKEPIESGSKDLCYKGHHWHEGCFNCTKCNHSLVEKPFAAKDERLLCSECYSNECSSKCFHCKKTIMPGSRKMEFKGNYWHETCFVCEHCRQPIGTKPLISKESGNYCVPCFEKEFAHYCSFCKKVITSGGITFRDQPWHKECFLCSGCRKELCEEEFMSRDDYPFCLDCYNHLYAKKCAACTKPITGLRGAKFICFQDRQWHSECFNCGKCSVSLVGEGFLTHNKEIFCRKCGSGVDTDI.

The segment at 8–32 (CQYCMASLLGKKYVLKDDNPYCVSC) adopts a C4-type zinc-finger fold. LIM zinc-binding domains lie at 39 to 100 (NYCE…ECSS), 101 to 160 (KCFH…KEFA), 161 to 220 (HYCS…LYAK), and 223 to 283 (AACT…VDTD).

As to quaternary structure, interacts with CREM (via the third LIM domain). Interacts (via second LIM domain) with SPAG8.

It localises to the nucleus. In terms of biological role, may be involved in the regulation of spermatogenesis. Stimulates CREM transcriptional activity in a phosphorylation-independent manner. This is Four and a half LIM domains protein 5 (FHL5) from Bos taurus (Bovine).